The chain runs to 339 residues: DNA-directed RNA polymerase subunit alpha (339 aa).

The interval 1–233 (MVREEVAGST…DLFLPFLHAE (233 aa)) is alpha N-terminal domain (alpha-NTD). Residues 264-339 (KKGIPLNCIF…IDLLKNKLSF (76 aa)) are alpha C-terminal domain (alpha-CTD).

This sequence belongs to the RNA polymerase alpha chain family. In terms of assembly, in plastids the minimal PEP RNA polymerase catalytic core is composed of four subunits: alpha, beta, beta', and beta''. When a (nuclear-encoded) sigma factor is associated with the core the holoenzyme is formed, which can initiate transcription.

It is found in the plastid. The protein resides in the chloroplast. It carries out the reaction RNA(n) + a ribonucleoside 5'-triphosphate = RNA(n+1) + diphosphate. Functionally, DNA-dependent RNA polymerase catalyzes the transcription of DNA into RNA using the four ribonucleoside triphosphates as substrates. The sequence is that of DNA-directed RNA polymerase subunit alpha from Australopyrum velutinum (Mountain wheat-grass).